A 256-amino-acid chain; its full sequence is Nuclear shuttle protein (256 aa).

Positions 21-42 (HSTGKRSRNVSRIDFKRRSSKY) match the Bipartite nuclear localization signal motif. Residues 81–96 (SLGKTEPSRSRSYIKL) carry the Nuclear localization signal motif. An interaction with Arabidopsis thaliana NSI protein region spans residues 150–187 (ELFGARIHSHGNLAVSSALKDRFYIRHVFKRVISVEKD).

The protein belongs to the begomovirus nuclear shuttle protein family. As to quaternary structure, binds to single-stranded and double-stranded viral DNA. Interacts with the host nuclear shuttle interacting (NSI) protein. This interaction may allow NSP to recruit NSI monomers to the viral genome and thus regulate nuclear export of viral genome by NSP.

The protein localises to the host nucleus. Its subcellular location is the host cytoplasm. The protein resides in the host cell membrane. Its function is as follows. Binds to the genomic viral ssDNA, shuttles it into and out of the cell nucleus. Begomoviruses use 2 proteins to transport their DNA from cell to cell. The nuclear shuttle protein (NSP) shuttles it between nucleus and cytoplasm and the movement protein (MP) probably transports the DNA-NSP complex to the cell periphery and facilitates movement across the cell wall. The chain is Nuclear shuttle protein from Solanum lycopersicum (Tomato).